The chain runs to 178 residues: Large ribosomal subunit protein uL6 (178 aa).

The protein belongs to the universal ribosomal protein uL6 family. In terms of assembly, part of the 50S ribosomal subunit.

In terms of biological role, this protein binds to the 23S rRNA, and is important in its secondary structure. It is located near the subunit interface in the base of the L7/L12 stalk, and near the tRNA binding site of the peptidyltransferase center. This is Large ribosomal subunit protein uL6 from Oenococcus oeni (strain ATCC BAA-331 / PSU-1).